A 440-amino-acid polypeptide reads, in one-letter code: Coenzyme A disulfide reductase (440 aa).

Residue 8-33 coordinates FAD; the sequence is GAVAGGATCASQIRRLDKDSEITIFE. 5 residues coordinate substrate: Thr-15, Gln-19, Arg-22, Ser-39, and Asn-42. Cys-43 acts as the Nucleophile in catalysis. The active-site Redox-active is Cys-43. Lys-71 is a binding site for substrate. 151 to 166 is a binding site for NADP(+); sequence ALVVGAGYISLEVLEN. 267–277 contacts FAD; the sequence is TNIPNIYALGD. His-299 contacts substrate. Tyr-419 serves as a coordination point for FAD. Lys-427 is a binding site for substrate.

Belongs to the class-III pyridine nucleotide-disulfide oxidoreductase family. In terms of assembly, homodimer. It depends on FAD as a cofactor.

It carries out the reaction NADP(+) + 2 CoA = CoA-disulfide + NADPH + H(+). Its function is as follows. Catalyzes specifically the NADPH-dependent reduction of coenzyme A disulfide. The chain is Coenzyme A disulfide reductase from Staphylococcus haemolyticus (strain JCSC1435).